A 313-amino-acid chain; its full sequence is T-box protein 37 (313 aa).

A DNA-binding region (T-box) is located at residues 19–195 (IWEKFYPKTE…HNKFASGFRS (177 aa)). Residues 193-228 (FRSNGKRRLSSESENSENSPPKRSASAISSLTPPAI) are disordered.

Its subcellular location is the nucleus. Transcription factor. Required for mesodermal induction, acting redundantly with transcription factor tbx-38. Together with tbx-38, acts by inducing cell fates in the AB lineage, thereby playing a role in development of the anterior pharynx. The chain is T-box protein 37 (tbx-37) from Caenorhabditis elegans.